We begin with the raw amino-acid sequence, 179 residues long: Large ribosomal subunit protein uL6 (179 aa).

The protein belongs to the universal ribosomal protein uL6 family. In terms of assembly, part of the 50S ribosomal subunit.

In terms of biological role, this protein binds to the 23S rRNA, and is important in its secondary structure. It is located near the subunit interface in the base of the L7/L12 stalk, and near the tRNA binding site of the peptidyltransferase center. The sequence is that of Large ribosomal subunit protein uL6 from Solidesulfovibrio magneticus (strain ATCC 700980 / DSM 13731 / RS-1) (Desulfovibrio magneticus).